The chain runs to 217 residues: Ribosomal RNA small subunit methyltransferase G (217 aa).

Residues glycine 76, phenylalanine 81, leucine 128–glutamate 129, and arginine 142 each bind S-adenosyl-L-methionine.

This sequence belongs to the methyltransferase superfamily. RNA methyltransferase RsmG family.

It is found in the cytoplasm. It carries out the reaction guanosine(527) in 16S rRNA + S-adenosyl-L-methionine = N(7)-methylguanosine(527) in 16S rRNA + S-adenosyl-L-homocysteine. Functionally, specifically methylates the N7 position of guanine in position 527 of 16S rRNA. The polypeptide is Ribosomal RNA small subunit methyltransferase G (Rhizorhabdus wittichii (strain DSM 6014 / CCUG 31198 / JCM 15750 / NBRC 105917 / EY 4224 / RW1) (Sphingomonas wittichii)).